The primary structure comprises 634 residues: DNA-directed RNA polymerase subunit gamma (634 aa).

4 residues coordinate Zn(2+): Cys74, Cys76, Cys89, and Cys92. The Mg(2+) site is built by Asp471, Asp473, and Asp475.

This sequence belongs to the RNA polymerase beta' chain family. RpoC1 subfamily. In terms of assembly, in cyanobacteria the RNAP catalytic core is composed of 2 alpha, 1 beta, 1 beta', 1 gamma and 1 omega subunit. When a sigma factor is associated with the core the holoenzyme is formed, which can initiate transcription. It depends on Mg(2+) as a cofactor. Zn(2+) serves as cofactor.

The enzyme catalyses RNA(n) + a ribonucleoside 5'-triphosphate = RNA(n+1) + diphosphate. Its function is as follows. DNA-dependent RNA polymerase catalyzes the transcription of DNA into RNA using the four ribonucleoside triphosphates as substrates. The protein is DNA-directed RNA polymerase subunit gamma of Prochlorococcus marinus (strain MIT 9515).